The chain runs to 504 residues: Maturase K (504 aa).

The protein belongs to the intron maturase 2 family. MatK subfamily.

It is found in the plastid. Its subcellular location is the chloroplast. In terms of biological role, usually encoded in the trnK tRNA gene intron. Probably assists in splicing its own and other chloroplast group II introns. This Quercus petraea (Durmast oak) protein is Maturase K.